A 225-amino-acid chain; its full sequence is ATP synthase F(0) complex subunit a (225 aa).

6 helical membrane passes run 10 to 30 (PSLL…ILLL), 69 to 89 (LILI…LLPY), 96 to 116 (QLSM…LIGL), 135 to 155 (LLIP…PIAL), 168 to 188 (LLIQ…PPLS), and 194 to 214 (VLIL…YVFV).

This sequence belongs to the ATPase A chain family. As to quaternary structure, component of the ATP synthase complex composed at least of ATP5F1A/subunit alpha, ATP5F1B/subunit beta, ATP5MC1/subunit c (homooctomer), MT-ATP6/subunit a, MT-ATP8/subunit 8, ATP5ME/subunit e, ATP5MF/subunit f, ATP5MG/subunit g, ATP5MK/subunit k, ATP5MJ/subunit j, ATP5F1C/subunit gamma, ATP5F1D/subunit delta, ATP5F1E/subunit epsilon, ATP5PF/subunit F6, ATP5PB/subunit b, ATP5PD/subunit d, ATP5PO/subunit OSCP. ATP synthase complex consists of a soluble F(1) head domain (subunits alpha(3) and beta(3)) - the catalytic core - and a membrane F(0) domain - the membrane proton channel (subunits c, a, 8, e, f, g, k and j). These two domains are linked by a central stalk (subunits gamma, delta, and epsilon) rotating inside the F1 region and a stationary peripheral stalk (subunits F6, b, d, and OSCP). Interacts with DNAJC30; interaction is direct.

Its subcellular location is the mitochondrion inner membrane. The catalysed reaction is H(+)(in) = H(+)(out). Functionally, subunit a, of the mitochondrial membrane ATP synthase complex (F(1)F(0) ATP synthase or Complex V) that produces ATP from ADP in the presence of a proton gradient across the membrane which is generated by electron transport complexes of the respiratory chain. ATP synthase complex consist of a soluble F(1) head domain - the catalytic core - and a membrane F(1) domain - the membrane proton channel. These two domains are linked by a central stalk rotating inside the F(1) region and a stationary peripheral stalk. During catalysis, ATP synthesis in the catalytic domain of F(1) is coupled via a rotary mechanism of the central stalk subunits to proton translocation. With the subunit c (ATP5MC1), forms the proton-conducting channel in the F(0) domain, that contains two crucial half-channels (inlet and outlet) that facilitate proton movement from the mitochondrial intermembrane space (IMS) into the matrix. Protons are taken up via the inlet half-channel and released through the outlet half-channel, following a Grotthuss mechanism. This Alligator mississippiensis (American alligator) protein is ATP synthase F(0) complex subunit a.